Reading from the N-terminus, the 82-residue chain is Small ribosomal subunit protein bS18 (82 aa).

A disordered region spans residues 1–20; that stretch reads MVDINQIPTRRPFHRRRKTC.

Belongs to the bacterial ribosomal protein bS18 family. As to quaternary structure, part of the 30S ribosomal subunit. Forms a tight heterodimer with protein bS6.

Functionally, binds as a heterodimer with protein bS6 to the central domain of the 16S rRNA, where it helps stabilize the platform of the 30S subunit. The protein is Small ribosomal subunit protein bS18 of Mesorhizobium japonicum (strain LMG 29417 / CECT 9101 / MAFF 303099) (Mesorhizobium loti (strain MAFF 303099)).